Reading from the N-terminus, the 769-residue chain is Glutathione biosynthesis bifunctional protein GshAB (769 aa).

A glutamate--cysteine ligase region spans residues 1 to 347; it reads MLDSFKEDPK…QLADENENNI (347 aa). Positions 514 to 768 constitute an ATP-grasp domain; that stretch reads KLVLAEHDIR…IGDKILDFLF (255 aa). Residue 541-599 coordinates ATP; the sequence is SLFEDKQIVVKPKSTNYGWGISIFKNKFTLEDYQEALNIAFSYDSSVIIEEFIPGDEFR. Positions 721, 738, and 740 each coordinate Mg(2+). The Mn(2+) site is built by D721, E738, and N740.

It in the N-terminal section; belongs to the glutamate--cysteine ligase type 1 family. Type 2 subfamily. In terms of assembly, monomer. Requires Mg(2+) as cofactor. Mn(2+) serves as cofactor.

It catalyses the reaction L-cysteine + L-glutamate + ATP = gamma-L-glutamyl-L-cysteine + ADP + phosphate + H(+). It carries out the reaction gamma-L-glutamyl-L-cysteine + glycine + ATP = glutathione + ADP + phosphate + H(+). It participates in sulfur metabolism; glutathione biosynthesis; glutathione from L-cysteine and L-glutamate: step 1/2. Its pathway is sulfur metabolism; glutathione biosynthesis; glutathione from L-cysteine and L-glutamate: step 2/2. In terms of biological role, synthesizes glutathione from L-glutamate and L-cysteine via gamma-L-glutamyl-L-cysteine. The protein is Glutathione biosynthesis bifunctional protein GshAB of Listeria monocytogenes serotype 4b (strain F2365).